The sequence spans 185 residues: Ribosome-recycling factor (185 aa).

It belongs to the RRF family.

The protein resides in the cytoplasm. Functionally, responsible for the release of ribosomes from messenger RNA at the termination of protein biosynthesis. May increase the efficiency of translation by recycling ribosomes from one round of translation to another. This chain is Ribosome-recycling factor, found in Lactococcus lactis subsp. cremoris (strain SK11).